The following is a 553-amino-acid chain: Dihydroxy-acid dehydratase (553 aa).

Asp78 serves as a coordination point for Mg(2+). Residue Cys119 participates in [2Fe-2S] cluster binding. Asp120 and Lys121 together coordinate Mg(2+). Lys121 carries the N6-carboxylysine modification. Cys193 serves as a coordination point for [2Fe-2S] cluster. A Mg(2+)-binding site is contributed by Glu441. Residue Ser467 is the Proton acceptor of the active site.

Belongs to the IlvD/Edd family. Homodimer. The cofactor is [2Fe-2S] cluster. Mg(2+) is required as a cofactor.

It carries out the reaction (2R)-2,3-dihydroxy-3-methylbutanoate = 3-methyl-2-oxobutanoate + H2O. The catalysed reaction is (2R,3R)-2,3-dihydroxy-3-methylpentanoate = (S)-3-methyl-2-oxopentanoate + H2O. The protein operates within amino-acid biosynthesis; L-isoleucine biosynthesis; L-isoleucine from 2-oxobutanoate: step 3/4. Its pathway is amino-acid biosynthesis; L-valine biosynthesis; L-valine from pyruvate: step 3/4. In terms of biological role, functions in the biosynthesis of branched-chain amino acids. Catalyzes the dehydration of (2R,3R)-2,3-dihydroxy-3-methylpentanoate (2,3-dihydroxy-3-methylvalerate) into 2-oxo-3-methylpentanoate (2-oxo-3-methylvalerate) and of (2R)-2,3-dihydroxy-3-methylbutanoate (2,3-dihydroxyisovalerate) into 2-oxo-3-methylbutanoate (2-oxoisovalerate), the penultimate precursor to L-isoleucine and L-valine, respectively. In Pelobacter propionicus (strain DSM 2379 / NBRC 103807 / OttBd1), this protein is Dihydroxy-acid dehydratase.